Here is a 491-residue protein sequence, read N- to C-terminus: (R)-citramalate synthase CimA (491 aa).

The 252-residue stretch at 3-254 (VRIFDTTLRD…DTKIKMEKLY (252 aa)) folds into the Pyruvate carboxyltransferase domain.

The protein belongs to the alpha-IPM synthase/homocitrate synthase family. As to quaternary structure, homodimer.

The enzyme catalyses pyruvate + acetyl-CoA + H2O = (3R)-citramalate + CoA + H(+). It participates in amino-acid biosynthesis; L-isoleucine biosynthesis; 2-oxobutanoate from pyruvate: step 1/3. Functionally, catalyzes the condensation of pyruvate and acetyl-coenzyme A to form (R)-citramalate. The protein is (R)-citramalate synthase CimA (cimA) of Methanocaldococcus jannaschii (strain ATCC 43067 / DSM 2661 / JAL-1 / JCM 10045 / NBRC 100440) (Methanococcus jannaschii).